A 193-amino-acid polypeptide reads, in one-letter code: Ion-translocating oxidoreductase complex subunit A (193 aa).

6 helical membrane passes run leucine 5–leucine 25, isoleucine 39–isoleucine 59, phenylalanine 62–alanine 82, valine 102–leucine 122, valine 134–leucine 154, and alanine 170–leucine 190.

Belongs to the NqrDE/RnfAE family. The complex is composed of six subunits: RnfA, RnfB, RnfC, RnfD, RnfE and RnfG.

Its subcellular location is the cell inner membrane. Functionally, part of a membrane-bound complex that couples electron transfer with translocation of ions across the membrane. The chain is Ion-translocating oxidoreductase complex subunit A from Azoarcus sp. (strain BH72).